The primary structure comprises 602 residues: Elongation factor 4 (602 aa).

The 183-residue stretch at 7–189 folds into the tr-type G domain; it reads KFIRNFSIIA…QLVVAIPPPV (183 aa). Residues 19 to 24 and 136 to 139 contribute to the GTP site; these read DHGKST and NKID.

It belongs to the TRAFAC class translation factor GTPase superfamily. Classic translation factor GTPase family. LepA subfamily.

The protein resides in the cell inner membrane. It catalyses the reaction GTP + H2O = GDP + phosphate + H(+). Functionally, required for accurate and efficient protein synthesis under certain stress conditions. May act as a fidelity factor of the translation reaction, by catalyzing a one-codon backward translocation of tRNAs on improperly translocated ribosomes. Back-translocation proceeds from a post-translocation (POST) complex to a pre-translocation (PRE) complex, thus giving elongation factor G a second chance to translocate the tRNAs correctly. Binds to ribosomes in a GTP-dependent manner. In Coxiella burnetii (strain RSA 493 / Nine Mile phase I), this protein is Elongation factor 4.